The sequence spans 214 residues: Redox-sensing transcriptional repressor Rex (214 aa).

A DNA-binding region (H-T-H motif) is located at residues 16 to 55 (LYYRYLIFLNDEGKEKVSSTELAEAVQVDSASIRRDFSYF). 90-95 (GVGNMG) serves as a coordination point for NAD(+).

It belongs to the transcriptional regulatory Rex family. In terms of assembly, homodimer.

The protein resides in the cytoplasm. Functionally, modulates transcription in response to changes in cellular NADH/NAD(+) redox state. In Lactobacillus gasseri (strain ATCC 33323 / DSM 20243 / BCRC 14619 / CIP 102991 / JCM 1131 / KCTC 3163 / NCIMB 11718 / NCTC 13722 / AM63), this protein is Redox-sensing transcriptional repressor Rex.